The chain runs to 672 residues: Putative per-hexamer repeat protein 5 (672 aa).

7 stretches are compositionally biased toward gly residues: residues 141-161 (TGTGTGTGTGTGTGTGTGTGT), 171-191 (TDRGTGTGTGTGTGTGTGTGT), 215-233 (TGTGTGTGTGTGTGTGTDT), 243-263 (TGTGTGTGTGTGTGTGTGTGT), 273-295 (TDRGTGTGTGTGTGTGTGTGTGT), 303-355 (TGTG…GSGS), and 365-389 (TGTGTGTDTGTGTGTGTGTGTGSGS). 2 disordered regions span residues 141-193 (TGTG…GTGT) and 213-672 (TGTG…TGTA). The segment covering 390-424 (GTAKVTGTATTTATVTETGTAKVTGTDTGTAKVTG) has biased composition (low complexity). Residues 425 to 469 (TGTGTGTGTGTGTGTGTGTGTGTGTGTGTGTGTGTGTGTGTGSGS) are compositionally biased toward gly residues. The span at 470–486 (GTAKVTGTDTGTAKVTG) shows a compositional bias: low complexity. A compositionally biased stretch (gly residues) spans 487–537 (TGTGTGTGTGTGTGTGTGTGTGTGSGSGSGSGSGSGSGTGTGTGLGSGSGS). Residues 538 to 552 (GTAKVTGTGTAKVTG) show a composition bias toward low complexity. A compositionally biased stretch (gly residues) spans 553–617 (TGTGTGTGTG…GTGTGTGTGT (65 aa)). A compositionally biased stretch (low complexity) spans 618-636 (GTSTVTVRGTGTGTATATG). Composition is skewed to gly residues over residues 637–653 (TGTGTGTGTGTGTGTGT) and 663–672 (RGTGTGTGTA).

This is Putative per-hexamer repeat protein 5 (Phxr5) from Mus musculus (Mouse).